The following is a 164-amino-acid chain: 6,7-dimethyl-8-ribityllumazine synthase (164 aa).

5-amino-6-(D-ribitylamino)uracil is bound by residues Tyr27, 58–60, and 87–89; these read ALE and CVI. (2S)-2-hydroxy-3-oxobutyl phosphate is bound at residue 92-93; sequence ET. The active-site Proton donor is the His95. Asn120 is a binding site for 5-amino-6-(D-ribitylamino)uracil. Arg134 is a (2S)-2-hydroxy-3-oxobutyl phosphate binding site.

Belongs to the DMRL synthase family.

The catalysed reaction is (2S)-2-hydroxy-3-oxobutyl phosphate + 5-amino-6-(D-ribitylamino)uracil = 6,7-dimethyl-8-(1-D-ribityl)lumazine + phosphate + 2 H2O + H(+). The protein operates within cofactor biosynthesis; riboflavin biosynthesis; riboflavin from 2-hydroxy-3-oxobutyl phosphate and 5-amino-6-(D-ribitylamino)uracil: step 1/2. In terms of biological role, catalyzes the formation of 6,7-dimethyl-8-ribityllumazine by condensation of 5-amino-6-(D-ribitylamino)uracil with 3,4-dihydroxy-2-butanone 4-phosphate. This is the penultimate step in the biosynthesis of riboflavin. In Methylocella silvestris (strain DSM 15510 / CIP 108128 / LMG 27833 / NCIMB 13906 / BL2), this protein is 6,7-dimethyl-8-ribityllumazine synthase.